We begin with the raw amino-acid sequence, 333 residues long: DNA-directed RNA polymerase subunit alpha (333 aa).

The interval 1–234 (MQISVNEFLT…QQLAAFVDLK (234 aa)) is alpha N-terminal domain (alpha-NTD). Positions 248–333 (IDPILLRPVD…SLKKDDKATA (86 aa)) are alpha C-terminal domain (alpha-CTD).

It belongs to the RNA polymerase alpha chain family. As to quaternary structure, homodimer. The RNAP catalytic core consists of 2 alpha, 1 beta, 1 beta' and 1 omega subunit. When a sigma factor is associated with the core the holoenzyme is formed, which can initiate transcription.

The enzyme catalyses RNA(n) + a ribonucleoside 5'-triphosphate = RNA(n+1) + diphosphate. DNA-dependent RNA polymerase catalyzes the transcription of DNA into RNA using the four ribonucleoside triphosphates as substrates. This is DNA-directed RNA polymerase subunit alpha from Ectopseudomonas mendocina (strain ymp) (Pseudomonas mendocina).